The following is a 378-amino-acid chain: UDP-N-acetylglucosamine--N-acetylmuramyl-(pentapeptide) pyrophosphoryl-undecaprenol N-acetylglucosamine transferase (378 aa).

UDP-N-acetyl-alpha-D-glucosamine-binding positions include 14 to 16 (TGG), N125, R165, S193, and Q293.

This sequence belongs to the glycosyltransferase 28 family. MurG subfamily.

Its subcellular location is the cell inner membrane. It catalyses the reaction di-trans,octa-cis-undecaprenyl diphospho-N-acetyl-alpha-D-muramoyl-L-alanyl-D-glutamyl-meso-2,6-diaminopimeloyl-D-alanyl-D-alanine + UDP-N-acetyl-alpha-D-glucosamine = di-trans,octa-cis-undecaprenyl diphospho-[N-acetyl-alpha-D-glucosaminyl-(1-&gt;4)]-N-acetyl-alpha-D-muramoyl-L-alanyl-D-glutamyl-meso-2,6-diaminopimeloyl-D-alanyl-D-alanine + UDP + H(+). The protein operates within cell wall biogenesis; peptidoglycan biosynthesis. Cell wall formation. Catalyzes the transfer of a GlcNAc subunit on undecaprenyl-pyrophosphoryl-MurNAc-pentapeptide (lipid intermediate I) to form undecaprenyl-pyrophosphoryl-MurNAc-(pentapeptide)GlcNAc (lipid intermediate II). The chain is UDP-N-acetylglucosamine--N-acetylmuramyl-(pentapeptide) pyrophosphoryl-undecaprenol N-acetylglucosamine transferase from Bartonella tribocorum (strain CIP 105476 / IBS 506).